A 308-amino-acid polypeptide reads, in one-letter code: Membrane protein insertase YidC 1 (308 aa).

A signal peptide spans 1-22 (MKSIKRFALSAMGAAMLLVLTG). C23 carries the N-palmitoyl cysteine lipid modification. Residue C23 is the site of S-diacylglycerol cysteine attachment. The next 5 helical transmembrane spans lie at 60 to 80 (FGVAIIIVTIIVRLIILPLGI), 135 to 155 (FGGVGCFPILLQMPFFSAIYF), 168 to 188 (YLGIPLGSPSMILVACAGVLY), 211 to 225 (MIYMSPLMIVVFSLF), and 230 to 252 (VTLYWVVGGFMMILQQFIVNYIV). Residues 263–308 (ELAKNPSKASAFSTPSGRKDVTPEQPTAITSKKKHKNRNAGKQRSR) form a disordered region. Positions 269-278 (SKASAFSTPS) are enriched in polar residues. Basic residues predominate over residues 293–308 (SKKKHKNRNAGKQRSR).

It belongs to the OXA1/ALB3/YidC family. Type 2 subfamily.

The protein resides in the cell membrane. Required for the insertion and/or proper folding and/or complex formation of integral membrane proteins into the membrane. Involved in integration of membrane proteins that insert both dependently and independently of the Sec translocase complex, as well as at least some lipoproteins. This chain is Membrane protein insertase YidC 1, found in Streptococcus pneumoniae (strain ATCC BAA-255 / R6).